Consider the following 170-residue polypeptide: Putative beta-eliminating lyase-like protein (170 aa).

At Lys-32 the chain carries N6-(pyridoxal phosphate)lysine.

It belongs to the beta-eliminating lyase family. Pyridoxal 5'-phosphate serves as cofactor.

The polypeptide is Putative beta-eliminating lyase-like protein (Dictyostelium discoideum (Social amoeba)).